The chain runs to 187 residues: Putative manganese efflux pump MntP (187 aa).

6 helical membrane-spanning segments follow: residues 8–28, 39–59, 65–85, 106–126, 131–151, and 166–186; these read FLSIGLAIDAFAVSLSSGFII, IALFFGIFQGVMPLIGWLTGL, LANFDHWIAFILLAAIGGKMI, LFALAIATSIDALAAGLGLSV, ILLACTLIASITFSLSFIGVF, and ILGGITLIGIGTKILVEGLII.

Belongs to the MntP (TC 9.B.29) family.

Its subcellular location is the cell inner membrane. Functionally, probably functions as a manganese efflux pump. The sequence is that of Putative manganese efflux pump MntP from Rippkaea orientalis (strain PCC 8801 / RF-1) (Cyanothece sp. (strain PCC 8801)).